We begin with the raw amino-acid sequence, 599 residues long: Sulfite reductase [NADPH] flavoprotein alpha-component (599 aa).

Positions 64-202 (VTLISASQTG…AASEWRARVV (139 aa)) constitute a Flavodoxin-like domain. FMN contacts are provided by residues 70–75 (SQTGNA), 117–120 (STQG), and 153–162 (LGDTSYEFFC). Residues 234 to 448 (DAPLAATLSV…IEHNDNFRLP (215 aa)) form the FAD-binding FR-type domain. Residues T322, A356, 386 to 389 (RLYS), 404 to 406 (TVG), Y410, and 419 to 422 (GGAS) contribute to the FAD site. NADP(+) is bound by residues 519–520 (SR), 525–529 (KIYVQ), and D561. FAD is bound at residue Y599.

This sequence belongs to the NADPH-dependent sulphite reductase flavoprotein subunit CysJ family. The protein in the N-terminal section; belongs to the flavodoxin family. In the C-terminal section; belongs to the flavoprotein pyridine nucleotide cytochrome reductase family. In terms of assembly, alpha(8)-beta(8). The alpha component is a flavoprotein, the beta component is a hemoprotein. Requires FAD as cofactor. The cofactor is FMN.

It catalyses the reaction hydrogen sulfide + 3 NADP(+) + 3 H2O = sulfite + 3 NADPH + 4 H(+). Its pathway is sulfur metabolism; hydrogen sulfide biosynthesis; hydrogen sulfide from sulfite (NADPH route): step 1/1. In terms of biological role, component of the sulfite reductase complex that catalyzes the 6-electron reduction of sulfite to sulfide. This is one of several activities required for the biosynthesis of L-cysteine from sulfate. The flavoprotein component catalyzes the electron flow from NADPH -&gt; FAD -&gt; FMN to the hemoprotein component. The protein is Sulfite reductase [NADPH] flavoprotein alpha-component of Salmonella paratyphi B (strain ATCC BAA-1250 / SPB7).